Consider the following 215-residue polypeptide: Sodium channel regulatory subunit beta-3 (215 aa).

The N-terminal stretch at 1-24 (MPAFNRLLPLASLVLIYWVRVCFP) is a signal peptide. In terms of domain architecture, Ig-like C2-type spans 25–138 (VCVEVPSETE…EAHRPFVKTT (114 aa)). Residues 25 to 156 (VCVEVPSETE…EEAGEDFTSV (132 aa)) lie on the Extracellular side of the membrane. 2 disulfides stabilise this stretch: cysteine 26-cysteine 48 and cysteine 45-cysteine 120. Residues asparagine 95, asparagine 109, asparagine 113, and asparagine 121 are each glycosylated (N-linked (GlcNAc...) asparagine). A helical transmembrane segment spans residues 157–178 (VSEIMMYILLVFLTLWLFIEMI). Residues 179 to 215 (YCYRKVSKAEEAAQENASDYLAIPSENKENSVVPVEE) lie on the Cytoplasmic side of the membrane.

This sequence belongs to the sodium channel auxiliary subunit SCN3B (TC 8.A.17) family. In terms of assembly, a voltage-gated sodium (Nav) channel consists of an ion-conducting pore-forming alpha subunit functional on its own that is regulated by one or more beta subunits. Forms homodimers and homotrimers. SCN3B is non-covalently associated with alpha subunits and induces the formation of alpha subunit oligomers, including trimers. Interacts with SCN5A/Nav1.5; regulatory subunit of SCN5A/Nav1.5. Interacts with SCN7A/Nav2.1; probable regulatory subunit of SCN7A/Nav2.1. Interacts with SCN10A; regulatory subunit of SCN10A/Nav1.8. Interacts with NFASC; probably involved in targeting the sodium channels to the nodes of Ranvier. Post-translationally, intramolecular disulfide bonds favor the voltage-gated sodium channel oligomeric complex assembly. N-glycosylated. Expressed broadly in neurons in the central and peripheral nervous systems, but not in glia and most non-neuronal cells. Weak detection in lung and adrenal gland.

The protein resides in the cell membrane. Its function is as follows. Regulatory subunit of multiple voltage-gated sodium (Nav) channels directly mediating the depolarization of excitable membranes. Navs, also called VGSCs (voltage-gated sodium channels) or VDSCs (voltage-dependent sodium channels), operate by switching between closed and open conformations depending on the voltage difference across the membrane. In the open conformation they allow Na(+) ions to selectively pass through the pore, along their electrochemical gradient. The influx of Na+ ions provokes membrane depolarization, initiating the propagation of electrical signals throughout cells and tissues. The accessory beta subunits participate in localization and functional modulation of the Nav channels. Voltage-gated sodium channels regulatory subunit that modulates channel gating kinetics. Modulates the activity of SCN2A/Nav1.2, causing a hyperpolarizing shift in the voltage-dependence of inactivation and increasing the fraction of channels operating in the fast gating mode. Also able to induce unique persistent SCN2A/Nav1.2-mediated sodium currents. Could modulate the activity of SCN10A/Nav1.8. The polypeptide is Sodium channel regulatory subunit beta-3 (Rattus norvegicus (Rat)).